Reading from the N-terminus, the 576-residue chain is Proline--tRNA ligase (576 aa).

It belongs to the class-II aminoacyl-tRNA synthetase family. ProS type 1 subfamily. In terms of assembly, homodimer.

The protein resides in the cytoplasm. The catalysed reaction is tRNA(Pro) + L-proline + ATP = L-prolyl-tRNA(Pro) + AMP + diphosphate. Functionally, catalyzes the attachment of proline to tRNA(Pro) in a two-step reaction: proline is first activated by ATP to form Pro-AMP and then transferred to the acceptor end of tRNA(Pro). As ProRS can inadvertently accommodate and process non-cognate amino acids such as alanine and cysteine, to avoid such errors it has two additional distinct editing activities against alanine. One activity is designated as 'pretransfer' editing and involves the tRNA(Pro)-independent hydrolysis of activated Ala-AMP. The other activity is designated 'posttransfer' editing and involves deacylation of mischarged Ala-tRNA(Pro). The misacylated Cys-tRNA(Pro) is not edited by ProRS. This is Proline--tRNA ligase from Bordetella petrii (strain ATCC BAA-461 / DSM 12804 / CCUG 43448).